Reading from the N-terminus, the 97-residue chain is Integration host factor subunit alpha (97 aa).

The segment at 49-71 (FGNFDLRDKNQRPGRNPKTGEDI) is disordered.

It belongs to the bacterial histone-like protein family. Heterodimer of an alpha and a beta chain.

This protein is one of the two subunits of integration host factor, a specific DNA-binding protein that functions in genetic recombination as well as in transcriptional and translational control. This chain is Integration host factor subunit alpha, found in Shewanella woodyi (strain ATCC 51908 / MS32).